A 161-amino-acid polypeptide reads, in one-letter code: Small ribosomal subunit protein bS16 (161 aa).

The tract at residues 114–161 (EGGPTTEATKPKKKSPAKKAKGGEGDADAAAEKVEASAEGEQTESAES) is disordered. Basic residues predominate over residues 124-133 (PKKKSPAKKA).

It belongs to the bacterial ribosomal protein bS16 family.

In Mycobacterium marinum (strain ATCC BAA-535 / M), this protein is Small ribosomal subunit protein bS16.